We begin with the raw amino-acid sequence, 151 residues long: Large ribosomal subunit protein uL13 (151 aa).

It belongs to the universal ribosomal protein uL13 family. In terms of assembly, part of the 50S ribosomal subunit.

Its function is as follows. This protein is one of the early assembly proteins of the 50S ribosomal subunit, although it is not seen to bind rRNA by itself. It is important during the early stages of 50S assembly. The polypeptide is Large ribosomal subunit protein uL13 (Petrotoga mobilis (strain DSM 10674 / SJ95)).